The sequence spans 80 residues: Large ribosomal subunit protein uL24 (80 aa).

This sequence belongs to the universal ribosomal protein uL24 family. In terms of assembly, part of the 50S ribosomal subunit.

Its function is as follows. One of two assembly initiator proteins, it binds directly to the 5'-end of the 23S rRNA, where it nucleates assembly of the 50S subunit. In terms of biological role, one of the proteins that surrounds the polypeptide exit tunnel on the outside of the subunit. This Chlorobium phaeovibrioides (strain DSM 265 / 1930) (Prosthecochloris vibrioformis (strain DSM 265)) protein is Large ribosomal subunit protein uL24.